A 102-amino-acid polypeptide reads, in one-letter code: Complement inhibitor RaCI3 (102 aa).

The first 24 residues, 1-24, serve as a signal peptide directing secretion; that stretch reads MAALNGLVLLLLTISAMFISECYS. Disulfide bonds link C37–C61, C42–C63, and C57–C78.

The protein belongs to the RaCI family. In terms of tissue distribution, expressed in salivary glands.

The protein resides in the secreted. Complement inhibitor. Prevents complement-mediated C5 activation by binding to C5. Binds C5 at a different binding site than the other tick complement inhibitors OmCI and CirpT1, and the drug eculizumab. Inhibits complement in human and guinea pig but not in other species tested (rabbit, rat, mouse, and pig). The protein is Complement inhibitor RaCI3 of Dermacentor andersoni (Rocky mountain wood tick).